A 507-amino-acid chain; its full sequence is MIAKSFIASFLFLCFAFSGVKADGCSEENGYYYCNQASEVEFTNVGYSSTYNEITNMDTSSCSCSSTPKSYGGNLAPFDEEFSFHFRGPIELKRFAVYYPDTSNALSSLRKRSNNQHMKRHPHHKRDDVIDSTLTVYETVMYTTAVYGDSATTPAASEAQASSDILSSLASLSSASTDNLAASVTPTTVAASVASSVDTDSASATISSVVDSATSSVSTVIPSSIISAAPPDSASESTPASTSYASSTTSATSTSTTSGSSGSSDWGRSSFYEADSGTSDNIVFLNNMGGSAGSGVWSSCFGNSLSFAASNGVDGASSSQVLENILVASDKEFSIWTATECNNDCGYYLPGIPAYHGFSGAKLVLMEFIMPHDSSSSYNQDMPAIWSLNAQIPRTLQYGNADCSCWTTGCGEFDIFEVLSTGNEKMIPTLHGSQGSSNGNGGGAGSSDYFARPTSSSMIGAVIYDTSSSGIYIIDVTDQNVSFDSTYSASDVDAWLQSGATIVQLSS.

A signal peptide spans M1–A22. The segment covering A228 to S264 has biased composition (low complexity). The interval A228 to W266 is disordered. The short motif at E412–E417 is the ExDxxE motif element. Residue N480 is glycosylated (N-linked (GlcNAc...) asparagine).

This sequence belongs to the PGA52 family.

The protein resides in the secreted. It catalyses the reaction Hydrolysis of (1-&gt;3)-beta-D-glucosidic linkages in (1-&gt;3)-beta-D-glucans.. In terms of biological role, probable circularly permuted 1,3-beta-glucanase involved in cell wall modification through beta-1,3-glucan network alterations such as increased branching or remodeling. In Schizosaccharomyces pombe (strain 972 / ATCC 24843) (Fission yeast), this protein is Probable circularly permuted 1,3-beta-glucanase P23A10.11c YJL171C.